Here is a 135-residue protein sequence, read N- to C-terminus: ATP synthase epsilon chain (135 aa).

The span at 90-103 (DVRRAESAKERAES) shows a compositional bias: basic and acidic residues. Residues 90–115 (DVRRAESAKERAESHLNNNDEDTDIN) are disordered.

This sequence belongs to the ATPase epsilon chain family. F-type ATPases have 2 components, CF(1) - the catalytic core - and CF(0) - the membrane proton channel. CF(1) has five subunits: alpha(3), beta(3), gamma(1), delta(1), epsilon(1). CF(0) has three main subunits: a, b and c.

Its subcellular location is the cell membrane. Functionally, produces ATP from ADP in the presence of a proton gradient across the membrane. The protein is ATP synthase epsilon chain of Staphylococcus carnosus (strain TM300).